A 216-amino-acid polypeptide reads, in one-letter code: Ras-related protein Rab-5C (216 aa).

GTP-binding residues include serine 30, alanine 31, glycine 33, lysine 34, serine 35, serine 36, histidine 47, glutamate 48, threonine 53, and glycine 79. Mg(2+) is bound at residue serine 35. Short sequence motifs (switch) lie at residues 45 to 57 and 78 to 94; these read QFHEYQESTIGAA and AGQERYHSLAPMYYRGA. Threonine 53 contacts Mg(2+). Position 85 is a phosphoserine (serine 85). GTP-binding residues include asparagine 134, lysine 135, aspartate 137, alanine 165, and lysine 166. The segment at 185 to 216 is disordered; that stretch reads NEPQNAAGAPSRNRGVDLQENSPASRSQCCSN. The segment covering 203-216 has biased composition (polar residues); sequence QENSPASRSQCCSN. 2 S-geranylgeranyl cysteine lipidation sites follow: cysteine 213 and cysteine 214.

The protein belongs to the small GTPase superfamily. Rab family. As to quaternary structure, interacts with EEA1 and INCA1. Interacts with GDI1, GDI2, CHML and CHM; phosphorylation at Ser-85 disrupts this interaction. Mg(2+) is required as a cofactor. Phosphorylation of Ser-85 in the switch II region by LRRK2 prevents the association of RAB regulatory proteins, including CHM, CHML and RAB GDP dissociation inhibitors GDI1 and GDI2.

It localises to the cell membrane. The protein resides in the early endosome membrane. Its subcellular location is the melanosome. The enzyme catalyses GTP + H2O = GDP + phosphate + H(+). Its activity is regulated as follows. Regulated by guanine nucleotide exchange factors (GEFs) which promote the exchange of bound GDP for free GTP. Regulated by GTPase activating proteins (GAPs) which increase the GTP hydrolysis activity. Inhibited by GDP dissociation inhibitors (GDIs). Functionally, the small GTPases Rab are key regulators of intracellular membrane trafficking, from the formation of transport vesicles to their fusion with membranes. Rabs cycle between an inactive GDP-bound form and an active GTP-bound form that is able to recruit to membranes different sets of downstream effectors directly responsible for vesicle formation, movement, tethering and fusion. The protein is Ras-related protein Rab-5C (RAB5C) of Canis lupus familiaris (Dog).